Consider the following 310-residue polypeptide: Syndecan-1 (310 aa).

An N-terminal signal peptide occupies residues 1–22 (MRRAALWLWLCALALSLQPALP). Residues 23-254 (QIVATNLPPE…GLLDRKEVLG (232 aa)) are Extracellular-facing. Disordered regions lie at residues 27-100 (TNLP…EGPK) and 114-212 (LTAR…QDFT). Residues 32 to 42 (EDQDGSGDDSD) show a composition bias toward acidic residues. Ser-37 carries O-linked (Xyl...) (chondroitin sulfate) serine glycosylation. A glycan (N-linked (GlcNAc...) asparagine) is linked at Asn-43. Ser-45 and Ser-47 each carry an O-linked (Xyl...) (heparan sulfate) serine glycan. The segment covering 55–75 (ITLSQQTPSTWKDTQLLTAIP) has biased composition (polar residues). Residues 117-127 (REQEATPRPRE) show a composition bias toward basic and acidic residues. Over residues 128–151 (TTQLPTTHLASTTTATTAQEPATS) the composition is skewed to low complexity. The span at 153-164 (PHRDMQPGHHET) shows a compositional bias: basic and acidic residues. 2 O-linked (Xyl...) (chondroitin sulfate) serine glycosylation sites follow: Ser-206 and Ser-216. Residues 255–275 (GVIAGGLVGLIFAVCLVGFML) form a helical membrane-spanning segment. Topologically, residues 276–310 (YRMKKKDEGSYSLEEPKQANGGAYQKPTKQEEFYA) are cytoplasmic. The segment at 284–310 (GSYSLEEPKQANGGAYQKPTKQEEFYA) is disordered. Ser-285 bears the Phosphoserine mark.

This sequence belongs to the syndecan proteoglycan family. Interacts with CDCP1. Interacts (via C-terminus) with TIAM1 (via PDZ domain). Interacts with MDK. In terms of processing, shedding is enhanced by a number of factors such as heparanase, thrombin or EGF. Also by stress and wound healing. PMA-mediated shedding is inhibited by TIMP3. As to expression, detected in placenta (at protein level). Detected in fibroblasts (at protein level).

It is found in the membrane. Its subcellular location is the secreted. The protein resides in the extracellular exosome. Cell surface proteoglycan that contains both heparan sulfate and chondroitin sulfate and that links the cytoskeleton to the interstitial matrix. Regulates exosome biogenesis in concert with SDCBP and PDCD6IP. Able to induce its own expression in dental mesenchymal cells and also in the neighboring dental epithelial cells via an MSX1-mediated pathway. The sequence is that of Syndecan-1 from Homo sapiens (Human).